The following is a 424-amino-acid chain: Hemagglutinin-esterase (424 aa).

An N-terminal signal peptide occupies residues 1-16; that stretch reads MFLLPRFVLVSCIIGS. Residues 7–127 are esterase domain 1; the sequence is FVLVSCIIGS…SNDIWMQNKG (121 aa). Topologically, residues 17 to 392 are virion surface; the sequence is LGFDNPPTNV…PICVYDPLPI (376 aa). Ser-40 functions as the Nucleophile in the catalytic mechanism. Cysteines 44 and 65 form a disulfide. Residues Asn-54, Asn-89, Asn-153, Asn-236, and Asn-301 are each glycosylated (N-linked (GlcNAc...) asparagine; by host). 3 disulfides stabilise this stretch: Cys-113/Cys-162, Cys-197/Cys-276, and Cys-205/Cys-249. The receptor binding stretch occupies residues 128-266; the sequence is LFYTQVYKNM…GNYLAISNEL (139 aa). The interval 267-379 is esterase domain 2; sequence LLTVPTKAIC…RCPTAADINT (113 aa). A disulfide bond links Cys-307 and Cys-312. An N-linked (GlcNAc...) asparagine; by host glycan is attached at Asn-316. Catalysis depends on charge relay system residues Asp-326 and His-329. A disulfide bond links Cys-347 and Cys-371. N-linked (GlcNAc...) asparagine; by host glycosylation is present at Asn-358. The helical transmembrane segment at 393–413 threads the bilayer; it reads ILLGILLGVAVIIIVVLLLYF. The Intravirion segment spans residues 414–424; that stretch reads MVDNGTRLHDA. The N-linked (GlcNAc...) asparagine; by host glycan is linked to Asn-417.

This sequence belongs to the influenza type C/coronaviruses hemagglutinin-esterase family. Homodimer; disulfide-linked. Forms a complex with the M protein in the pre-Golgi. Associates then with S-M complex to form a ternary complex S-M-HE. Post-translationally, N-glycosylated in the RER. In terms of processing, N-glycosylated in the host RER.

Its subcellular location is the virion membrane. The protein resides in the host cell membrane. It catalyses the reaction N-acetyl-9-O-acetylneuraminate + H2O = N-acetylneuraminate + acetate + H(+). It carries out the reaction N-acetyl-4-O-acetylneuraminate + H2O = N-acetylneuraminate + acetate + H(+). Structural protein that makes short spikes at the surface of the virus. Contains receptor binding and receptor-destroying activities. Mediates de-O-acetylation of N-acetyl-4-O-acetylneuraminic acid, which is probably the receptor determinant recognized by the virus on the surface of erythrocytes and susceptible cells. This receptor-destroying activity is important for virus release as it probably helps preventing self-aggregation and ensures the efficient spread of the progeny virus from cell to cell. May serve as a secondary viral attachment protein for initiating infection, the spike protein being the major one. May become a target for both the humoral and the cellular branches of the immune system. The sequence is that of Hemagglutinin-esterase from Bovine coronavirus (strain 98TXSF-110-ENT) (BCoV-ENT).